Consider the following 567-residue polypeptide: Urease subunit alpha (567 aa).

One can recognise a Urease domain in the interval G129–F567. 3 residues coordinate Ni(2+): H134, H136, and K217. K217 is subject to N6-carboxylysine. Position 219 (H219) interacts with substrate. Residues H246 and H272 each contribute to the Ni(2+) site. H320 (proton donor) is an active-site residue. Position 360 (D360) interacts with Ni(2+).

It belongs to the metallo-dependent hydrolases superfamily. Urease alpha subunit family. Heterotrimer of UreA (gamma), UreB (beta) and UreC (alpha) subunits. Three heterotrimers associate to form the active enzyme. Requires Ni cation as cofactor. Carboxylation allows a single lysine to coordinate two nickel ions.

The protein localises to the cytoplasm. The catalysed reaction is urea + 2 H2O + H(+) = hydrogencarbonate + 2 NH4(+). It participates in nitrogen metabolism; urea degradation; CO(2) and NH(3) from urea (urease route): step 1/1. This chain is Urease subunit alpha, found in Pseudomonas putida (strain ATCC 700007 / DSM 6899 / JCM 31910 / BCRC 17059 / LMG 24140 / F1).